The chain runs to 101 residues: MAKKSKIVKNDRRRATVARYAERRAELKEIIRSPRSTPEQRTAAQNELAHQPRDASAVRVRNRDAVDGRPRGHLRKFGLSRVRVRELAHAGQLPGVRKASW.

The interval 29–60 is disordered; sequence EIIRSPRSTPEQRTAAQNELAHQPRDASAVRV. A compositionally biased stretch (polar residues) spans 34–45; that stretch reads PRSTPEQRTAAQ.

The protein belongs to the universal ribosomal protein uS14 family. As to quaternary structure, part of the 30S ribosomal subunit. Contacts proteins S3 and S10.

In terms of biological role, binds 16S rRNA, required for the assembly of 30S particles and may also be responsible for determining the conformation of the 16S rRNA at the A site. The sequence is that of Small ribosomal subunit protein uS14A from Mycolicibacterium paratuberculosis (strain ATCC BAA-968 / K-10) (Mycobacterium paratuberculosis).